A 376-amino-acid polypeptide reads, in one-letter code: Erythronate-4-phosphate dehydrogenase (376 aa).

2 residues coordinate substrate: Ser45 and Thr67. Asp147 serves as a coordination point for NAD(+). Arg209 is a catalytic residue. Asp233 contacts NAD(+). Glu238 is a catalytic residue. His255 acts as the Proton donor in catalysis. Gly258 contributes to the NAD(+) binding site. Tyr259 contributes to the substrate binding site.

The protein belongs to the D-isomer specific 2-hydroxyacid dehydrogenase family. PdxB subfamily. In terms of assembly, homodimer.

Its subcellular location is the cytoplasm. The enzyme catalyses 4-phospho-D-erythronate + NAD(+) = (R)-3-hydroxy-2-oxo-4-phosphooxybutanoate + NADH + H(+). It participates in cofactor biosynthesis; pyridoxine 5'-phosphate biosynthesis; pyridoxine 5'-phosphate from D-erythrose 4-phosphate: step 2/5. In terms of biological role, catalyzes the oxidation of erythronate-4-phosphate to 3-hydroxy-2-oxo-4-phosphonooxybutanoate. The sequence is that of Erythronate-4-phosphate dehydrogenase from Shewanella baltica (strain OS223).